Here is a 425-residue protein sequence, read N- to C-terminus: Enolase (425 aa).

Gln-163 serves as a coordination point for (2R)-2-phosphoglycerate. Residue Glu-205 is the Proton donor of the active site. Mg(2+) is bound by residues Asp-242, Glu-285, and Asp-312. Residues Lys-337, Arg-366, Ser-367, and Lys-388 each contribute to the (2R)-2-phosphoglycerate site. Lys-337 functions as the Proton acceptor in the catalytic mechanism.

It belongs to the enolase family. Mg(2+) is required as a cofactor.

It is found in the cytoplasm. The protein resides in the secreted. The protein localises to the cell surface. The enzyme catalyses (2R)-2-phosphoglycerate = phosphoenolpyruvate + H2O. The protein operates within carbohydrate degradation; glycolysis; pyruvate from D-glyceraldehyde 3-phosphate: step 4/5. In terms of biological role, catalyzes the reversible conversion of 2-phosphoglycerate (2-PG) into phosphoenolpyruvate (PEP). It is essential for the degradation of carbohydrates via glycolysis. In Paracoccus denitrificans (strain Pd 1222), this protein is Enolase.